Consider the following 689-residue polypeptide: Transcription factor MYC2 (689 aa).

The interval 94–172 is JAZ-interaction domain; it reads LQQRLQALID…VLRELNSLIS (79 aa). Positions 316 to 349 are enriched in polar residues; that stretch reads NTVQTNSVPSSNSNKQIAYGNENNHPSGNGQSCY. Disordered regions lie at residues 316–361 and 420–519; these read NTVQ…PQQQ and QSQF…EAER. The span at 350 to 361 shows a compositional bias: low complexity; sequence NQQQQKNPPQQQ. Residues 471–495 are compositionally biased toward basic and acidic residues; sequence DSEHSDLEASVVKEADSSRVVEPEK. Residues 496–505 are compositionally biased toward basic residues; sequence RPRKRGRKPA. The span at 506–519 shows a compositional bias: basic and acidic residues; the sequence is NGREEPLNHVEAER. Residues 509–522 form a basic motif; degenerate region; sequence EEPLNHVEAERQRR. The 50-residue stretch at 509-558 folds into the bHLH domain; that stretch reads EEPLNHVEAERQRREKLNQRFYALRAVVPNVSKMDKASLLGDAISYINEL. The segment at 523-558 is helix-loop-helix motif; sequence EKLNQRFYALRAVVPNVSKMDKASLLGDAISYINEL. Residues 563–602 form a disordered region; that stretch reads QNTESDKEDLKSQIEDLKKESRRPGPPPPPNQDLKMSSHT. The span at 566 to 585 shows a compositional bias: basic and acidic residues; it reads ESDKEDLKSQIEDLKKESRR.

As to quaternary structure, interacts (via N-terminus) with MED25. Interacts (via N-terminus) with JAZ7. MED25 and JAZ7 compete with each other to bind to MYC2. Interacts (via N-terminus) with MTB1. MTB1 and MED25 compete with each other to bind to MYC2. As to expression, expressed at low levels in roots, stems, leaves, flowers and fruits.

It localises to the nucleus. Transcriptional activator that binds to the G-box motif (5'-AACGTG-3') found in the promoter of the jasmonate-induced gene LAPA1. Acts as a negative regulator of blue light-mediated photomorphogenesis and positively regulates root growth. Promotes growth in response to the phytohormones abscisic acid (ABA) and jasmonate (JA). Binds to the G-box motif (5'-CACGTG-3') of the RBCS-3A gene promoter. Acts downstream of the jasmonate (JA) receptor to orchestrate JA-mediated activation of plant responses. Positively regulates both wound-responsive and pathogen-responsive genes through MYC2-targeted transcription factors (MTFs) involved in early response to JA. With JA2L forms a transcription module that regulates wounding-responsive genes. With ERF.C3 forms a transcription module that regulates pathogen-responsive genes. Plays a critical role in orchestrating JA-mediated defense gene expression during Botrytis cinerea infection. Negatively regulates defense responses to root-knot nematodes, potentially by mediating crosstalk among the hormones strigolactones, abscisic acid (ABA) and jasmonate (JA). Regulates the termination of JA-mediated defense responses by specifically binding the G-box (5'-CACATG-3') motifs in the promoters of MTB1, MTB2 and MTB3, which are transcription factors that negatively regulates JA signaling. May be involved in JA-induced chilling tolerance, possibly by ameliorating the antioxidant enzyme system of fruit and increasing proline and lycopene levels. The sequence is that of Transcription factor MYC2 from Solanum lycopersicum (Tomato).